We begin with the raw amino-acid sequence, 255 residues long: Thiazole synthase (255 aa).

Lys95 functions as the Schiff-base intermediate with DXP in the catalytic mechanism. Residues Gly156, 182 to 183 (AG), and 204 to 205 (NT) contribute to the 1-deoxy-D-xylulose 5-phosphate site.

This sequence belongs to the ThiG family. As to quaternary structure, homotetramer. Forms heterodimers with either ThiH or ThiS.

The protein localises to the cytoplasm. The enzyme catalyses [ThiS sulfur-carrier protein]-C-terminal-Gly-aminoethanethioate + 2-iminoacetate + 1-deoxy-D-xylulose 5-phosphate = [ThiS sulfur-carrier protein]-C-terminal Gly-Gly + 2-[(2R,5Z)-2-carboxy-4-methylthiazol-5(2H)-ylidene]ethyl phosphate + 2 H2O + H(+). Its pathway is cofactor biosynthesis; thiamine diphosphate biosynthesis. Its function is as follows. Catalyzes the rearrangement of 1-deoxy-D-xylulose 5-phosphate (DXP) to produce the thiazole phosphate moiety of thiamine. Sulfur is provided by the thiocarboxylate moiety of the carrier protein ThiS. In vitro, sulfur can be provided by H(2)S. The protein is Thiazole synthase of Photorhabdus laumondii subsp. laumondii (strain DSM 15139 / CIP 105565 / TT01) (Photorhabdus luminescens subsp. laumondii).